The following is an 821-amino-acid chain: Fibroblast growth factor receptor 2 (821 aa).

A signal peptide spans 1–21 (MVSWGRFICLVVVTMATLSLA). Topologically, residues 22 to 377 (RPSFSLVEDT…EITASPDYLE (356 aa)) are extracellular. An Ig-like C2-type 1 domain is found at 25 to 125 (FSLVEDTTLE…ETWYFMVNVT (101 aa)). Cys62 and Cys107 are disulfide-bonded. Asn83 and Asn123 each carry an N-linked (GlcNAc...) asparagine glycan. Over residues 131–144 (GDDEDDTDGAEDFV) the composition is skewed to acidic residues. The tract at residues 131-151 (GDDEDDTDGAEDFVSENSNNK) is disordered. 2 consecutive Ig-like C2-type domains span residues 154–247 (PYWT…YHLD) and 256–358 (PILQ…AWLT). The interval 161–178 (KMEKRLHAVPAANTVKFR) is heparin-binding. A disulfide bond links Cys179 and Cys231. N-linked (GlcNAc...) asparagine glycosylation is found at Asn228, Asn241, Asn265, Asn297, Asn318, and Asn331. Cys278 and Cys342 form a disulfide bridge. A helical transmembrane segment spans residues 378–398 (IAIYCIGVFLIACMVVTVILC). The Cytoplasmic segment spans residues 399 to 821 (RMKNTTKKPD…YPHINGSVKT (423 aa)). A Phosphotyrosine; by autocatalysis modification is found at Tyr466. One can recognise a Protein kinase domain in the interval 481–770 (LTLGKPLGEG…LTLTTNEEYL (290 aa)). ATP is bound by residues 487–495 (LGEGCFGQV), Lys517, 565–567 (EYA), and Asn571. Tyr586 and Tyr588 each carry phosphotyrosine; by autocatalysis. Asp626 (proton acceptor) is an active-site residue. Phosphotyrosine; by autocatalysis occurs at positions 656, 657, and 769. The residue at position 780 (Ser780) is a Phosphoserine.

This sequence belongs to the protein kinase superfamily. Tyr protein kinase family. Fibroblast growth factor receptor subfamily. As to quaternary structure, monomer. Homodimer after ligand binding. Interacts predominantly with FGF1 and FGF2, but can also interact with FGF3, FGF4, FGF6, FGF7, FGF8, FGF9, FGF10, FGF17, FGF18 and FGF22 (in vitro). Ligand specificity is determined by tissue-specific expression of isoforms, and differences in the third Ig-like domain are crucial for ligand specificity. Isoform 1 has high affinity for FGF1 and FGF2, but low affinity for FGF7. Isoform 3 has high affinity for FGF1 and FGF7, and has much higher affinity for FGF7 than isoform 1 (in vitro). Affinity for fibroblast growth factors (FGFs) is increased by heparan sulfate glycosaminoglycans that function as coreceptors. Likewise, KLB increases the affinity for FGF19 and FGF21. Interacts with PLCG1, GRB2 and PAK4. Interacts with FLRT2. Autophosphorylated. Binding of FGF family members together with heparan sulfate proteoglycan or heparin promotes receptor dimerization and autophosphorylation on several tyrosine residues. Autophosphorylation occurs in trans between the two FGFR molecules present in the dimer. Phosphorylation at Tyr-769 is essential for interaction with PLCG1. In terms of processing, N-glycosylated in the endoplasmic reticulum. The N-glycan chains undergo further maturation to an Endo H-resistant form in the Golgi apparatus. Post-translationally, ubiquitinated. FGFR2 is rapidly ubiquitinated after autophosphorylation, leading to internalization and degradation. Subject to degradation both in lysosomes and by the proteasome.

The protein localises to the cell membrane. It localises to the golgi apparatus. The protein resides in the cytoplasmic vesicle. Its subcellular location is the secreted. It carries out the reaction L-tyrosyl-[protein] + ATP = O-phospho-L-tyrosyl-[protein] + ADP + H(+). Present in an inactive conformation in the absence of bound ligand. Ligand binding leads to dimerization and activation by autophosphorylation on tyrosine residues. Inhibited by ARQ 523 and ARQ 069; these compounds maintain the kinase in an inactive conformation and inhibit autophosphorylation. Functionally, tyrosine-protein kinase that acts as a cell-surface receptor for fibroblast growth factors and plays an essential role in the regulation of cell proliferation, differentiation, migration and apoptosis, and in the regulation of embryonic development. Required for normal embryonic patterning, trophoblast function, limb bud development, lung morphogenesis, osteogenesis and skin development. Plays an essential role in the regulation of osteoblast differentiation, proliferation and apoptosis, and is required for normal skeleton development. Promotes cell proliferation in keratinocytes and immature osteoblasts, but promotes apoptosis in differentiated osteoblasts. Phosphorylates PLCG1, FRS2 and PAK4. Ligand binding leads to the activation of several signaling cascades. Activation of PLCG1 leads to the production of the cellular signaling molecules diacylglycerol and inositol 1,4,5-trisphosphate. Phosphorylation of FRS2 triggers recruitment of GRB2, GAB1, PIK3R1 and SOS1, and mediates activation of RAS, MAPK1/ERK2, MAPK3/ERK1 and the MAP kinase signaling pathway, as well as of the AKT1 signaling pathway. FGFR2 signaling is down-regulated by ubiquitination, internalization and degradation. Mutations that lead to constitutive kinase activation or impair normal FGFR2 maturation, internalization and degradation lead to aberrant signaling. Over-expressed FGFR2 promotes activation of STAT1. This is Fibroblast growth factor receptor 2 (FGFR2) from Homo sapiens (Human).